The following is a 490-amino-acid chain: MKGLLSLSVLPVLAYASPMIVDSIHQNAAPILSSTNAKDIPDSYIVVFKKGVTSTSALAHQNWVQDIHTSVESKRMKKRNQFTFKNEAFDGLKHTFDFAGGFLGYSGHFDEEVIEQVRRHPDVEYIERDSEVHTLKAATENGAPWGLARISHRDKLNFGTFNKYIYASQGGEGVDAYVIDTGTNIDHVDFEGRASWGKTIPQGDDDVDGNGHGTHCSGTIAGKKYGVAKKANVYAVKVLRTSGSGTMSDVVKGVQWAAESHLKSVGEAKKGNRKGFKGSVANMSLGGGKSVTLDRVVDQAVAVGMHFAVAAGNDNADACNYSPAGSKNSITVGASTLADERAYFSNFGKCTDIFAPGLNIQSTWIGSKHAVNTISGTSMASPHICGLLAYFLSLQPASDSAFAVAEITPAEMKDNMISIASKDLLSDIPSDTPNLLAWNGGGSDDYKKIIGGARENDTTEFSSTLTEKLEKLAEEGLTAIYNELKDAVVA.

An N-terminal signal peptide occupies residues 1–26 (MKGLLSLSVLPVLAYASPMIVDSIHQ). Positions 27–134 (NAAPILSSTN…YIERDSEVHT (108 aa)) are excised as a propeptide. The Inhibitor I9 domain occupies 43–134 (SYIVVFKKGV…YIERDSEVHT (92 aa)). Positions 144–450 (PWGLARISHR…GGSDDYKKII (307 aa)) constitute a Peptidase S8 domain. Residues Asp-180 and His-212 each act as charge relay system in the active site. N-linked (GlcNAc...) asparagine glycosylation occurs at Asn-282. Ser-378 functions as the Charge relay system in the catalytic mechanism. Residue Asn-456 is glycosylated (N-linked (GlcNAc...) asparagine).

The protein belongs to the peptidase S8 family.

The protein resides in the secreted. Its function is as follows. Secreted subtilisin-like serine protease with keratinolytic activity that contributes to pathogenicity. The chain is Subtilisin-like protease 8 (SUB8) from Arthroderma benhamiae (strain ATCC MYA-4681 / CBS 112371) (Trichophyton mentagrophytes).